The primary structure comprises 306 residues: Homoserine kinase (306 aa).

Residue 91–101 (PLARGLGSSAA) participates in ATP binding.

Belongs to the GHMP kinase family. Homoserine kinase subfamily.

The protein localises to the cytoplasm. The catalysed reaction is L-homoserine + ATP = O-phospho-L-homoserine + ADP + H(+). Its pathway is amino-acid biosynthesis; L-threonine biosynthesis; L-threonine from L-aspartate: step 4/5. Its function is as follows. Catalyzes the ATP-dependent phosphorylation of L-homoserine to L-homoserine phosphate. The protein is Homoserine kinase of Bacillus licheniformis (strain ATCC 14580 / DSM 13 / JCM 2505 / CCUG 7422 / NBRC 12200 / NCIMB 9375 / NCTC 10341 / NRRL NRS-1264 / Gibson 46).